Here is a 139-residue protein sequence, read N- to C-terminus: MLSPKRTKFRHQHRGRIKGISSRGNRICFGRFALQALEPVWITSGQIEAGRRAITRYARRGVKIWIRIFPDKPIRTRPAEIRMGSGKAKGSPEYWVSVVKPGRILYEISGVSETIARAAFQIVAYKMPIHTKFITSLRK.

Belongs to the universal ribosomal protein uL16 family. Part of the 50S ribosomal subunit.

The protein localises to the plastid. Its subcellular location is the chloroplast. This is Large ribosomal subunit protein uL16c from Cryptomeria japonica (Japanese cedar).